Reading from the N-terminus, the 326-residue chain is tRNA-modifying protein YgfZ (326 aa).

Folate contacts are provided by Trp27 and Trp189.

This sequence belongs to the tRNA-modifying YgfZ family.

The protein resides in the cytoplasm. Folate-binding protein involved in regulating the level of ATP-DnaA and in the modification of some tRNAs. It is probably a key factor in regulatory networks that act via tRNA modification, such as initiation of chromosomal replication. This Escherichia coli O127:H6 (strain E2348/69 / EPEC) protein is tRNA-modifying protein YgfZ.